The chain runs to 82 residues: uncharacterized protein (82 aa).

This is an uncharacterized protein from Methanocaldococcus jannaschii (strain ATCC 43067 / DSM 2661 / JAL-1 / JCM 10045 / NBRC 100440) (Methanococcus jannaschii).